A 329-amino-acid polypeptide reads, in one-letter code: Tetraacyldisaccharide 4'-kinase (329 aa).

Residue 57–64 (TAGGSGKT) participates in ATP binding.

It belongs to the LpxK family.

It catalyses the reaction a lipid A disaccharide + ATP = a lipid IVA + ADP + H(+). Its pathway is glycolipid biosynthesis; lipid IV(A) biosynthesis; lipid IV(A) from (3R)-3-hydroxytetradecanoyl-[acyl-carrier-protein] and UDP-N-acetyl-alpha-D-glucosamine: step 6/6. Functionally, transfers the gamma-phosphate of ATP to the 4'-position of a tetraacyldisaccharide 1-phosphate intermediate (termed DS-1-P) to form tetraacyldisaccharide 1,4'-bis-phosphate (lipid IVA). The chain is Tetraacyldisaccharide 4'-kinase from Thiobacillus denitrificans (strain ATCC 25259 / T1).